Consider the following 427-residue polypeptide: 3-isopropylmalate dehydratase large subunit (427 aa).

3 residues coordinate [4Fe-4S] cluster: Cys-308, Cys-368, and Cys-371.

The protein belongs to the aconitase/IPM isomerase family. LeuC type 2 subfamily. As to quaternary structure, heterodimer of LeuC and LeuD. The cofactor is [4Fe-4S] cluster.

It carries out the reaction (2R,3S)-3-isopropylmalate = (2S)-2-isopropylmalate. It participates in amino-acid biosynthesis; L-leucine biosynthesis; L-leucine from 3-methyl-2-oxobutanoate: step 2/4. Functionally, catalyzes the isomerization between 2-isopropylmalate and 3-isopropylmalate, via the formation of 2-isopropylmaleate. This Geobacter metallireducens (strain ATCC 53774 / DSM 7210 / GS-15) protein is 3-isopropylmalate dehydratase large subunit.